The following is a 386-amino-acid chain: DNase toxin Tse7 (386 aa).

In terms of assembly, interacts with Tsi7.

It catalyses the reaction Endonucleolytic cleavage to 5'-phosphodinucleotide and 5'-phosphooligonucleotide end-products.. Its function is as follows. Type VI secretion exported toxin that via to its DNase activity induces growth arrest and ultimately DNA degradation within target cell. The activity is initially neutralized by a cognate immunity protein Tsi7. The polypeptide is DNase toxin Tse7 (Pseudomonas aeruginosa (strain ATCC 15692 / DSM 22644 / CIP 104116 / JCM 14847 / LMG 12228 / 1C / PRS 101 / PAO1)).